The primary structure comprises 254 residues: MLFLALGGPWAAGLRLSGKRTALWASSALRDPRAAVSRAASCRGSSGRVGGTGLSAAAPVLRRVRAQIPVCWERGVRCSHTQLDKSEDGRLIYTGNLARTVFGVKCFSYSTSLISLAFLPYIFAQNNVIFGSLPLQILFYGTIGSFTVITPALLHFLTKGYVIRLYHEARTDTYKAITYSVVLSEKSTVFHQNDVKIPNSTHVFTTFYAKTKSLLVNPALFPNPEDYNHLMGYDKPFTFDLEEASEKKQLKEEK.

The transit peptide at 1-78 (MLFLALGGPW…PVCWERGVRC (78 aa)) directs the protein to the mitochondrion. Over 79-112 (SHTQLDKSEDGRLIYTGNLARTVFGVKCFSYSTS) the chain is Mitochondrial matrix. Residues 113–133 (LISLAFLPYIFAQNNVIFGSL) form a helical membrane-spanning segment. Topologically, residues 134 to 136 (PLQ) are mitochondrial intermembrane. Residues 137 to 157 (ILFYGTIGSFTVITPALLHFL) traverse the membrane as a helical segment. Residues 158 to 254 (TKGYVIRLYH…SEKKQLKEEK (97 aa)) are Mitochondrial matrix-facing.

Belongs to the TMEM70 family. Homooligomer. Interacts (homooligomer form) with ATP5MC1; this interaction facilitates the oligomer formation of subunit c/ATP5MC1 (c-ring) and the c-ring membrane insertion and also protects ATP5MC1 against intramitochondrial proteolysis. Interacts with the core subunits TMEM126B, NDUFAF1, ECSIT and ACAD9 of the MCIA complex. Interacts with ATP5MC3, TMEM242 and TIMMDC1.

The protein localises to the mitochondrion inner membrane. Scaffold protein that participates in the c-ring assembly of mitochondrial ATP synthase (F(1)F(0) ATP synthase or complex V) by facilitating the membrane insertion and oligomer formation of the subunit c/ATP5MC1 through its interaction. Therefore, participates in the early stage of mitochondrial ATP synthase biogenesis and also protects subunit c/ATP5MC1 against intramitochondrial proteolysis. In addition, binds the mitochondrial proton-transporting ATP synthase complexes I and may play a role in the stability of its membrane-bound subassemblies. This is Transmembrane protein 70, mitochondrial from Bos taurus (Bovine).